Here is a 252-residue protein sequence, read N- to C-terminus: Ribosomal RNA small subunit methyltransferase J (252 aa).

Residues 101–102, 117–118, 153–154, and D171 each bind S-adenosyl-L-methionine; these read RD, ER, and SS.

It belongs to the methyltransferase superfamily. RsmJ family.

The protein localises to the cytoplasm. The enzyme catalyses guanosine(1516) in 16S rRNA + S-adenosyl-L-methionine = N(2)-methylguanosine(1516) in 16S rRNA + S-adenosyl-L-homocysteine + H(+). In terms of biological role, specifically methylates the guanosine in position 1516 of 16S rRNA. This chain is Ribosomal RNA small subunit methyltransferase J, found in Salmonella schwarzengrund (strain CVM19633).